The sequence spans 185 residues: Protein GrpE (185 aa).

A disordered region spans residues 1–37; sequence MEEQEEKQYNQNIQDNEEGTQMREELQESTSAQQTLQ. Polar residues predominate over residues 28–37; the sequence is ESTSAQQTLQ.

Belongs to the GrpE family. As to quaternary structure, homodimer.

The protein resides in the cytoplasm. Functionally, participates actively in the response to hyperosmotic and heat shock by preventing the aggregation of stress-denatured proteins, in association with DnaK and GrpE. It is the nucleotide exchange factor for DnaK and may function as a thermosensor. Unfolded proteins bind initially to DnaJ; upon interaction with the DnaJ-bound protein, DnaK hydrolyzes its bound ATP, resulting in the formation of a stable complex. GrpE releases ADP from DnaK; ATP binding to DnaK triggers the release of the substrate protein, thus completing the reaction cycle. Several rounds of ATP-dependent interactions between DnaJ, DnaK and GrpE are required for fully efficient folding. The chain is Protein GrpE from Helicobacter hepaticus (strain ATCC 51449 / 3B1).